A 65-amino-acid chain; its full sequence is Muscarinic toxin 3 (65 aa).

Intrachain disulfides connect Cys-3-Cys-24, Cys-17-Cys-42, Cys-46-Cys-57, and Cys-58-Cys-63.

It belongs to the three-finger toxin family. Short-chain subfamily. Aminergic toxin sub-subfamily. As to expression, expressed by the venom gland.

The protein localises to the secreted. In terms of biological role, potent antagonist (IC(50)=1-10 nM) of M4 (CHRM4) muscarinic receptors, and CHRM1, ADRA1A, ADRA2A and ADRA2C adrenergic receptors. Also antagonises ADRA1B and ADRA1D adrenergic receptors with a 10-times lower affinity. This Dendroaspis angusticeps (Eastern green mamba) protein is Muscarinic toxin 3.